Reading from the N-terminus, the 496-residue chain is Chromosomal replication initiator protein DnaA (496 aa).

The interval 1–76 (MKMDSAVSEE…TELWQEENPQ (76 aa)) is domain I, interacts with DnaA modulators. Positions 76-150 (QILKVEVVVR…AAATGAVLGS (75 aa)) are domain II. Positions 151–373 (PLDPRYTFDT…GAFNQLLFRQ (223 aa)) are domain III, AAA+ region. ATP contacts are provided by G197, G199, K200, and T201. The tract at residues 374–496 (SFEPNISIDR…LKRLINDQAA (123 aa)) is domain IV, binds dsDNA.

Belongs to the DnaA family. In terms of assembly, oligomerizes as a right-handed, spiral filament on DNA at oriC.

The protein resides in the cytoplasm. Functionally, plays an essential role in the initiation and regulation of chromosomal replication. ATP-DnaA binds to the origin of replication (oriC) to initiate formation of the DNA replication initiation complex once per cell cycle. Binds the DnaA box (a 9 base pair repeat at the origin) and separates the double-stranded (ds)DNA. Forms a right-handed helical filament on oriC DNA; dsDNA binds to the exterior of the filament while single-stranded (ss)DNA is stabiized in the filament's interior. The ATP-DnaA-oriC complex binds and stabilizes one strand of the AT-rich DNA unwinding element (DUE), permitting loading of DNA polymerase. After initiation quickly degrades to an ADP-DnaA complex that is not apt for DNA replication. Binds acidic phospholipids. The sequence is that of Chromosomal replication initiator protein DnaA from Brucella abortus biovar 1 (strain 9-941).